The following is a 404-amino-acid chain: 4-hydroxyphenylpyruvate dioxygenase (404 aa).

2 consecutive VOC domains span residues 28–163 and 194–353; these read GYDH…FIQR and YVDH…IFTK. Residues His197, His280, and Glu364 each coordinate Fe cation.

This sequence belongs to the 4HPPD family. It depends on Fe cation as a cofactor.

It catalyses the reaction 3-(4-hydroxyphenyl)pyruvate + O2 = homogentisate + CO2. Its pathway is amino-acid degradation; L-phenylalanine degradation; acetoacetate and fumarate from L-phenylalanine: step 3/6. In terms of biological role, key enzyme in the degradation of tyrosine. The protein is 4-hydroxyphenylpyruvate dioxygenase (TFA) of Tetrahymena thermophila.